The following is a 379-amino-acid chain: Protein RecA (379 aa).

ATP is bound at residue 79–86 (GPESSGKT).

The protein belongs to the RecA family.

It is found in the cytoplasm. Can catalyze the hydrolysis of ATP in the presence of single-stranded DNA, the ATP-dependent uptake of single-stranded DNA by duplex DNA, and the ATP-dependent hybridization of homologous single-stranded DNAs. It interacts with LexA causing its activation and leading to its autocatalytic cleavage. This is Protein RecA from Streptococcus agalactiae serotype III (strain NEM316).